Here is a 127-residue protein sequence, read N- to C-terminus: Large ribosomal subunit protein bL12 (127 aa).

Residues 98 to 127 are disordered; sequence PKPVKNGVSKEEAEEAKKQLVESGAEVEIK. Residues 105–117 show a composition bias toward basic and acidic residues; that stretch reads VSKEEAEEAKKQL.

The protein belongs to the bacterial ribosomal protein bL12 family. In terms of assembly, homodimer. Part of the ribosomal stalk of the 50S ribosomal subunit. Forms a multimeric L10(L12)X complex, where L10 forms an elongated spine to which 2 to 4 L12 dimers bind in a sequential fashion. Binds GTP-bound translation factors.

Functionally, forms part of the ribosomal stalk which helps the ribosome interact with GTP-bound translation factors. Is thus essential for accurate translation. The chain is Large ribosomal subunit protein bL12 from Geobacter sulfurreducens (strain ATCC 51573 / DSM 12127 / PCA).